We begin with the raw amino-acid sequence, 72 residues long: Brevinin-2GHc (72 aa).

A signal peptide spans 1 to 22; sequence MFTMKKSLLLLFFLGMISLSLC. A propeptide spanning residues 23–42 is cleaved from the precursor; that stretch reads EQERGADEDEGEVEEQIKRS. Cys64 and Cys70 are oxidised to a cystine.

As to expression, expressed by the skin glands.

It localises to the secreted. Its function is as follows. Antimicrobial peptide. Active against the Gram-positive bacteria S.aureus FDA209P (MIC=9.8 ug/ml) and B.subtilis ATCC 6633 (MIC&gt;64 ug/ml), and the Gram-negative bacteria E.coli O111 (MIC=19.6 ug/ml) and E.coli ATCC 25922 (MIC=9.8 ug/ml). Not active against the fungus C.albicans. This is Brevinin-2GHc from Sylvirana guentheri (Gunther's frog).